We begin with the raw amino-acid sequence, 223 residues long: Imidazoleglycerol-phosphate dehydratase (223 aa).

This sequence belongs to the imidazoleglycerol-phosphate dehydratase family.

It carries out the reaction D-erythro-1-(imidazol-4-yl)glycerol 3-phosphate = 3-(imidazol-4-yl)-2-oxopropyl phosphate + H2O. It functions in the pathway amino-acid biosynthesis; L-histidine biosynthesis; L-histidine from 5-phospho-alpha-D-ribose 1-diphosphate: step 6/9. The polypeptide is Imidazoleglycerol-phosphate dehydratase (HIS3) (Zygosaccharomyces bailii).